The following is a 718-amino-acid chain: Methionine--tRNA ligase (718 aa).

The 'HIGH' region motif lies at 27 to 37 (PYANGQIHIGH). Zn(2+)-binding residues include cysteine 158, cysteine 161, cysteine 171, and cysteine 174. The 'KMSKS' region signature appears at 348–352 (KMSKS). Lysine 351 contributes to the ATP binding site. Residues 612–718 (DFAKIDLRIA…SGAKPGMRVK (107 aa)) enclose the tRNA-binding domain.

Belongs to the class-I aminoacyl-tRNA synthetase family. MetG type 1 subfamily. In terms of assembly, homodimer. It depends on Zn(2+) as a cofactor.

The protein resides in the cytoplasm. The catalysed reaction is tRNA(Met) + L-methionine + ATP = L-methionyl-tRNA(Met) + AMP + diphosphate. In terms of biological role, is required not only for elongation of protein synthesis but also for the initiation of all mRNA translation through initiator tRNA(fMet) aminoacylation. The polypeptide is Methionine--tRNA ligase (Burkholderia thailandensis (strain ATCC 700388 / DSM 13276 / CCUG 48851 / CIP 106301 / E264)).